The chain runs to 181 residues: ATP-dependent protease subunit HslV (181 aa).

Thr-11 is a catalytic residue. Residues Ala-166, Cys-169, and Thr-172 each contribute to the Na(+) site.

The protein belongs to the peptidase T1B family. HslV subfamily. In terms of assembly, a double ring-shaped homohexamer of HslV is capped on each side by a ring-shaped HslU homohexamer. The assembly of the HslU/HslV complex is dependent on binding of ATP.

The protein localises to the cytoplasm. The enzyme catalyses ATP-dependent cleavage of peptide bonds with broad specificity.. With respect to regulation, allosterically activated by HslU binding. Its function is as follows. Protease subunit of a proteasome-like degradation complex believed to be a general protein degrading machinery. The sequence is that of ATP-dependent protease subunit HslV from Chlorobaculum parvum (strain DSM 263 / NCIMB 8327) (Chlorobium vibrioforme subsp. thiosulfatophilum).